Here is a 317-residue protein sequence, read N- to C-terminus: L-lactate dehydrogenase (317 aa).

Residues Val-17, Asp-38, Lys-43, Tyr-69, and 83–84 (GA) each bind NAD(+). Residues Gln-86 and Arg-92 each coordinate substrate. Residues Ser-105, 122–124 (ATN), and Ser-147 contribute to the NAD(+) site. 124–127 (NPVD) provides a ligand contact to substrate. 152–155 (DTAR) serves as a coordination point for substrate. 2 residues coordinate beta-D-fructose 1,6-bisphosphate: Arg-157 and His-172. The active-site Proton acceptor is His-179. Tyr-224 bears the Phosphotyrosine mark. Residue Thr-233 participates in substrate binding.

It belongs to the LDH/MDH superfamily. LDH family. As to quaternary structure, homotetramer.

It localises to the cytoplasm. The catalysed reaction is (S)-lactate + NAD(+) = pyruvate + NADH + H(+). It functions in the pathway fermentation; pyruvate fermentation to lactate; (S)-lactate from pyruvate: step 1/1. Allosterically activated by fructose 1,6-bisphosphate (FBP). Catalyzes the conversion of lactate to pyruvate. The protein is L-lactate dehydrogenase of Geobacillus thermodenitrificans (strain NG80-2).